The following is a 1122-amino-acid chain: MDSLAGLVLCGVSLLLYGVVEGAMDLILINSLPLVSDAETSLTCIASGWHPHEPITIGRDFEALMNQHQDPLEVTQDVTREWAKKVVWKREKASKINGAYFCEGRVRGQAIRIRTMKMRQQASFLPATLTMTVDRGDNVNISFKKVLIKEEDAVIYKNGSFIHSVPRHEVPDILEVHLPHAQPQDAGVYSARYIGGNLFTSAFTRLIVRRCEAQKWGPDCSRPCTTCKNNGVCHEDTGECICPPGFMGRTCEKACEPHTFGRTCKERCSGPEGCKSYVFCLPDPYGCSCATGWRGLQCNEACPSGYYGPDCKLRCHCTNEEICDRFQGCLCSQGWQGLQCEKEGRPRMTPQIEDLPDHIEVNSGKFNPICKASGWPLPTSEEMTLVKPDGTVLQPNDFNYTDRFSVAIFTVNRVLPPDSGVWVCSVNTVAGMVEKPFNISVKVLPEPLHAPNVIDTGHNFAIINISSEPYFGDGPIKSKKLFYKPVNQAWKYIEVTNEIFTLNYLEPRTDYELCVQLARPGEGGEGHPGPVRRFTTASIGLPPPRGLSLLPKSQTALNLTWQPIFTNSEDEFYVEVERRSLQTTSDQQNIKVPGNLTSVLLSNLVPREQYTVRARVNTKAQGEWSEELRAWTLSDILPPQPENIKISNITDSTAMVSWTIVDGYSISSIIIRYKVQGKNEDQHIDVKIKNATVTQYQLKGLEPETTYHVDIFAENNIGSSNPAFSHELRTLPHSPASADLGGGKMLLIAILGSAGMTCITVLLAFLIMLQLKRANVQRRMAQAFQNREEPAVQFNSGTLALNRKAKNNPDPTIYPVLDWNDIKFQDVIGEGNFGQVLKARIKKDGLRMDAAIKRMKEYASKDDHRDFAGELEVLCKLGHHPNIINLLGACEHRGYLYLAIEYAPHGNLLDFLRKSRVLETDPAFAIANSTASTLSSQQLLHFAADVARGMDYLSQKQFIHRDLAARNILVGENYIAKIADFGLSRGQEVYVKKTMGRLPVRWMAIESLNYSVYTTNSDVWSYGVLLWEIVSLGGTPYCGMTCAELYEKLPQGYRLEKPLNCDDEVYDLMRQCWREKPYERPSFAQILVSLNRMLEERKTYVNTTLYEKFTYAGIDCSAEEAA.

The signal sequence occupies residues 1-22 (MDSLAGLVLCGVSLLLYGVVEG). The Extracellular portion of the chain corresponds to 23-746 (AMDLILINSL…SADLGGGKML (724 aa)). Cys44 and Cys102 form a disulfide bridge. The 80-residue stretch at 44–123 (CIASGWHPHE…RTMKMRQQAS (80 aa)) folds into the Ig-like C2-type 1 domain. Residues Asn140 and Asn158 are each glycosylated (N-linked (GlcNAc...) asparagine). 3 consecutive EGF-like domains span residues 210-252 (RCEA…RTCE), 254-299 (ACEP…LQCN), and 301-341 (ACPS…LQCE). 13 disulfides stabilise this stretch: Cys211/Cys220, Cys224/Cys233, Cys227/Cys240, Cys242/Cys251, Cys255/Cys264, Cys268/Cys274, Cys280/Cys287, Cys289/Cys298, Cys302/Cys311, Cys315/Cys323, Cys317/Cys329, Cys331/Cys340, and Cys370/Cys424. The region spanning 350-440 (PQIEDLPDHI…GMVEKPFNIS (91 aa)) is the Ig-like C2-type 2 domain. Asn399, Asn438, Asn464, Asn558, Asn595, Asn648, and Asn690 each carry an N-linked (GlcNAc...) asparagine glycan. Fibronectin type-III domains follow at residues 444-539 (LPEP…TASI), 543-635 (PPRG…TLSD), and 640-733 (QPEN…TLPH). A helical membrane pass occupies residues 747-767 (LIAILGSAGMTCITVLLAFLI). Topologically, residues 768 to 1122 (MLQLKRANVQ…GIDCSAEEAA (355 aa)) are cytoplasmic. Residues 822 to 1094 (IKFQDVIGEG…QILVSLNRML (273 aa)) form the Protein kinase domain. Residues 828–836 (IGEGNFGQV) and Lys853 each bind ATP. Tyr858 is modified (phosphotyrosine; by autocatalysis). The active-site Proton acceptor is the Asp962. A phosphotyrosine; by autocatalysis mark is found at Tyr990, Tyr1100, and Tyr1106.

Belongs to the protein kinase superfamily. Tyr protein kinase family. Tie subfamily. As to quaternary structure, homodimer. Heterodimer with TIE1. Interacts with ANGPT1, ANGPT2 and ANGPT4. At cell-cell contacts in quiescent cells, forms a signaling complex composed of ANGPT1 plus TEK molecules from two adjoining cells. In the absence of endothelial cell-cell contacts, interaction with ANGPT1 mediates contacts with the extracellular matrix. Interacts (tyrosine phosphorylated) with TNIP2. Interacts (tyrosine phosphorylated) with SHC1 (via SH2 domain). Interacts with PTPRB; this promotes endothelial cell-cell adhesion. Interacts with DOK2, GRB2, GRB7, GRB14, PIK3R1 and PTPN11/SHP2. Colocalizes with DOK2 at contacts with the extracellular matrix in migrating cells. Proteolytic processing leads to the shedding of the extracellular domain (soluble TIE-2 alias sTIE-2). In terms of processing, autophosphorylated on tyrosine residues in response to ligand binding. Autophosphorylation occurs in trans, i.e. one subunit of the dimeric receptor phosphorylates tyrosine residues on the other subunit. Autophosphorylation occurs in a sequential manner, where Tyr-990 in the kinase activation loop is phosphorylated first, followed by autophosphorylation at Tyr-1106 and at additional tyrosine residues. ANGPT1-induced phosphorylation is impaired during hypoxia, due to increased expression of ANGPT2. Phosphorylation is important for interaction with GRB14, PIK3R1 and PTPN11. Phosphorylation at Tyr-1100 is important for interaction with GRB2 and GRB7. Phosphorylation at Tyr-1106 is important for interaction with DOK2 and for coupling to downstream signal transduction pathways in endothelial cells. Dephosphorylated by PTPRB. Post-translationally, ubiquitinated. The phosphorylated receptor is ubiquitinated and internalized, leading to its degradation. In terms of tissue distribution, specifically expressed in developing vascular endothelial cells. Abundantly expressed in lung and heart, moderately in brain, liver and kidney, and weakly in thymus, spleen and testis.

The protein localises to the cell membrane. Its subcellular location is the cell junction. It is found in the focal adhesion. It localises to the cytoplasm. The protein resides in the cytoskeleton. The protein localises to the secreted. It carries out the reaction L-tyrosyl-[protein] + ATP = O-phospho-L-tyrosyl-[protein] + ADP + H(+). Its activity is regulated as follows. Angiopoietin binding leads to receptor dimerization and activation by autophosphorylation at Tyr-990 on the kinase activation loop. Tyrosine-protein kinase that acts as a cell-surface receptor for ANGPT1, ANGPT2 and ANGPT4 and regulates angiogenesis, endothelial cell survival, proliferation, migration, adhesion and cell spreading, reorganization of the actin cytoskeleton, but also maintenance of vascular quiescence. Has anti-inflammatory effects by preventing the leakage of pro-inflammatory plasma proteins and leukocytes from blood vessels. Required for normal angiogenesis and heart development during embryogenesis. Required for postnatal hematopoiesis. After birth, activates or inhibits angiogenesis, depending on the context. Inhibits angiogenesis and promotes vascular stability in quiescent vessels, where endothelial cells have tight contacts. In quiescent vessels, ANGPT1 oligomers recruit TEK to cell-cell contacts, forming complexes with TEK molecules from adjoining cells, and this leads to preferential activation of phosphatidylinositol 3-kinase and the AKT1 signaling cascades. In migrating endothelial cells that lack cell-cell adhesions, ANGT1 recruits TEK to contacts with the extracellular matrix, leading to the formation of focal adhesion complexes, activation of PTK2/FAK and of the downstream kinases MAPK1/ERK2 and MAPK3/ERK1, and ultimately to the stimulation of sprouting angiogenesis. ANGPT1 signaling triggers receptor dimerization and autophosphorylation at specific tyrosine residues that then serve as binding sites for scaffold proteins and effectors. Signaling is modulated by ANGPT2 that has lower affinity for TEK, can promote TEK autophosphorylation in the absence of ANGPT1, but inhibits ANGPT1-mediated signaling by competing for the same binding site. Signaling is also modulated by formation of heterodimers with TIE1, and by proteolytic processing that gives rise to a soluble TEK extracellular domain. The soluble extracellular domain modulates signaling by functioning as decoy receptor for angiopoietins. TEK phosphorylates DOK2, GRB7, GRB14, PIK3R1, SHC1 and TIE1. In Mus musculus (Mouse), this protein is Angiopoietin-1 receptor (Tek).